A 73-amino-acid chain; its full sequence is Translation initiation factor IF-1 (73 aa).

The S1-like domain occupies 1–73; sequence MSKKKDVIEM…TRGRITYRYK (73 aa).

The protein belongs to the IF-1 family. As to quaternary structure, component of the 30S ribosomal translation pre-initiation complex which assembles on the 30S ribosome in the order IF-2 and IF-3, IF-1 and N-formylmethionyl-tRNA(fMet); mRNA recruitment can occur at any time during PIC assembly.

It is found in the cytoplasm. In terms of biological role, one of the essential components for the initiation of protein synthesis. Stabilizes the binding of IF-2 and IF-3 on the 30S subunit to which N-formylmethionyl-tRNA(fMet) subsequently binds. Helps modulate mRNA selection, yielding the 30S pre-initiation complex (PIC). Upon addition of the 50S ribosomal subunit IF-1, IF-2 and IF-3 are released leaving the mature 70S translation initiation complex. In Chloroflexus aurantiacus (strain ATCC 29366 / DSM 635 / J-10-fl), this protein is Translation initiation factor IF-1.